The following is a 236-amino-acid chain: 7-cyano-7-deazaguanine synthase (236 aa).

ATP is bound at residue 7-17 (CSGGLDSVSLA). Zn(2+) contacts are provided by Cys-185, Cys-193, Cys-196, and Cys-199.

It belongs to the QueC family. Zn(2+) is required as a cofactor.

It carries out the reaction 7-carboxy-7-deazaguanine + NH4(+) + ATP = 7-cyano-7-deazaguanine + ADP + phosphate + H2O + H(+). It functions in the pathway purine metabolism; 7-cyano-7-deazaguanine biosynthesis. In terms of biological role, catalyzes the ATP-dependent conversion of 7-carboxy-7-deazaguanine (CDG) to 7-cyano-7-deazaguanine (preQ(0)). The chain is 7-cyano-7-deazaguanine synthase from Rhizobium etli (strain CIAT 652).